The following is a 104-amino-acid chain: MATKLKSAKSIVPLLDRILVQRIKADTKTASGIFLPEKSVEKLSEGRVISVGKGGYNKEGKLAQPSVAVGDRVLLPAYGGSNIKVGEEEYSLYRDHELLAIIKE.

Ser-81 carries the post-translational modification Phosphoserine.

Belongs to the GroES chaperonin family. As to quaternary structure, homohexamer.

It localises to the mitochondrion matrix. Its function is as follows. Eukaryotic CPN10 homolog which is essential for mitochondrial protein biogenesis, together with CPN60. Binds to CPN60 in the presence of Mg-ATP and suppresses the ATPase activity of the latter. The protein is 10 kDa heat shock protein, mitochondrial (hsp10) of Schizosaccharomyces pombe (strain 972 / ATCC 24843) (Fission yeast).